Here is a 106-residue protein sequence, read N- to C-terminus: DNA-directed RNA polymerase subunit omega (106 aa).

Residues 76–106 (REPAREAAEPAGEAPEEQQRAAGEREDQGAA) are disordered. Over residues 92–106 (EQQRAAGEREDQGAA) the composition is skewed to basic and acidic residues.

The protein belongs to the RNA polymerase subunit omega family. The RNAP catalytic core consists of 2 alpha, 1 beta, 1 beta' and 1 omega subunit. When a sigma factor is associated with the core the holoenzyme is formed, which can initiate transcription.

It carries out the reaction RNA(n) + a ribonucleoside 5'-triphosphate = RNA(n+1) + diphosphate. Functionally, promotes RNA polymerase assembly. Latches the N- and C-terminal regions of the beta' subunit thereby facilitating its interaction with the beta and alpha subunits. The chain is DNA-directed RNA polymerase subunit omega from Rubrobacter xylanophilus (strain DSM 9941 / JCM 11954 / NBRC 16129 / PRD-1).